A 1347-amino-acid chain; its full sequence is Spermatogenesis-associated protein 31A1 (1347 aa).

Residues 23-43 (PWVLDIFLTLVFALGFFFLLL) form a helical membrane-spanning segment. Disordered regions lie at residues 55–89 (PSPS…ECPR), 106–235 (GPHL…STLI), 373–397 (EQDT…GPQK), 628–658 (DESP…EAQK), 899–955 (PRGI…REAV), and 1085–1160 (HEEP…PPSV). The segment covering 60–82 (GKRKCPVGRRRRPRGRMKNHSLR) has biased composition (basic residues). Polar residues predominate over residues 165–178 (LASTPSPGPMTTSV). Positions 198–222 (PEPPALFPHPPHTPDPLACSPPPPK) are enriched in pro residues. 2 stretches are compositionally biased toward polar residues: residues 631–651 (PGTS…STGE) and 927–948 (LTYS…SSKA). Basic and acidic residues-rich tracts occupy residues 1108–1127 (HKSE…RLEG) and 1137–1146 (RKTEDTHQDE).

Belongs to the SPATA31 family.

It is found in the membrane. In terms of biological role, may play a role in spermatogenesis. The sequence is that of Spermatogenesis-associated protein 31A1 from Homo sapiens (Human).